A 336-amino-acid polypeptide reads, in one-letter code: MAVDKEVQLHAQAWEHALSYINSTALSAAVELEIPDILEDHGGLMSLSELSAASGCPREPLYRLMRFLIFHGIFTKSDDCYAQSPLSRLFTRENLGPYMLMQATPVTRSPAGLSGEALKTGTSLYLKSIRGEDSWSDPAYGYHMKAFTNAMIAHARLTAAAIVSNYPAAFDGLRSVVDVGGRHGTAIGRLVEAFPWVRGIAFDLPEIVADAPPRKGVDFVGGDMFESVPKADAVMLMWILHDWSDDKCIEILKKCKEAIPASTGKVMIVDAIINEDGEGDEFSGARLSLDMIMLAVMAQGKERTYKEWVHLLNEAGFSKHTVKNIKSIESVIEAYP.

S-adenosyl-L-methionine contacts are provided by Y140 and D203. The active-site Proton acceptor is the H241.

This sequence belongs to the class I-like SAM-binding methyltransferase superfamily. Cation-independent O-methyltransferase family. As to quaternary structure, homodimer. Expressed in leaves.

The catalysed reaction is scutellarein 7-methyl ether + S-adenosyl-L-methionine = ladanein + S-adenosyl-L-homocysteine + H(+). It carries out the reaction cirsimaritin + S-adenosyl-L-methionine = salvigenin + S-adenosyl-L-homocysteine + H(+). It catalyses the reaction cirsiliol + S-adenosyl-L-methionine = eupatorin + S-adenosyl-L-homocysteine + H(+). The enzyme catalyses genkwanin + S-adenosyl-L-methionine = apigenin 4',7-dimethyl ether + S-adenosyl-L-homocysteine. It functions in the pathway flavonoid metabolism. Substrate inhibition by genkwanin (GENK) at concentrations above 2.5 mM. Its function is as follows. Flavonoid 4'-O-methyltransferase involved in the biosynthesis of polymethoxylated flavonoids natural products such as nevadensin and salvigenin, aroma compounds which contribute to the flavor of sweet basil, and exhibit pharmacological activities such as anti-allergic, anti-oxidant, antibacterial, anti-proliferative, and anti-inflammatory effects. Catalyzes S-adenosylmethionine-dependent regioselective 4'-O-methylation of flavonoids; active on various hydroxylated flavonoid substrates, including scutellarein-7-methyl ether (SCU7Me) and cirsimaritin (CIRM), and, with a lower efficiency, hispidulin, ladanein (LAD), cirsioliol (CIRL) and genkwanin (GENK). The polypeptide is Flavonoid 4'-O-methyltransferase 3 (Ocimum basilicum (Sweet basil)).